The primary structure comprises 366 residues: Chorismate synthase (366 aa).

Positions 48 and 54 each coordinate NADP(+). Residues 132 to 134, 244 to 245, glycine 289, 304 to 308, and arginine 330 contribute to the FMN site; these read RSS, NA, and KPTSS.

Belongs to the chorismate synthase family. In terms of assembly, homotetramer. The cofactor is FMNH2.

The catalysed reaction is 5-O-(1-carboxyvinyl)-3-phosphoshikimate = chorismate + phosphate. It participates in metabolic intermediate biosynthesis; chorismate biosynthesis; chorismate from D-erythrose 4-phosphate and phosphoenolpyruvate: step 7/7. In terms of biological role, catalyzes the anti-1,4-elimination of the C-3 phosphate and the C-6 proR hydrogen from 5-enolpyruvylshikimate-3-phosphate (EPSP) to yield chorismate, which is the branch point compound that serves as the starting substrate for the three terminal pathways of aromatic amino acid biosynthesis. This reaction introduces a second double bond into the aromatic ring system. The protein is Chorismate synthase of Methylobacterium radiotolerans (strain ATCC 27329 / DSM 1819 / JCM 2831 / NBRC 15690 / NCIMB 10815 / 0-1).